The primary structure comprises 207 residues: Arginine exporter protein ArgO (207 aa).

6 helical membrane passes run 1–21 (MLSTFVQGFFLSAAMILPLGP), 42–62 (LCAISDGFLIGVGVFGGSALL), 67–87 (LLLQFVTWGGVAFLFWYGWGA), 111–131 (VVAIIFAVTWLNPHVYLDTIV), 150–170 (FGAASASVSWFFSLSLLAAWF), and 185–205 (GFICIIMWYIAWQLAKQGLLI).

This sequence belongs to the LysE/ArgO transporter (TC 2.A.75) family.

Its subcellular location is the cell inner membrane. The enzyme catalyses L-arginine(in) = L-arginine(out). Functionally, involved in the export of arginine. Important to control the intracellular level of arginine and the correct balance between arginine and lysine. The polypeptide is Arginine exporter protein ArgO (Photorhabdus laumondii subsp. laumondii (strain DSM 15139 / CIP 105565 / TT01) (Photorhabdus luminescens subsp. laumondii)).